The chain runs to 219 residues: Small ribosomal subunit protein uS3 (219 aa).

The KH type-2 domain maps to 39-108 (IKEFIKKNYF…KVTVKVQEIK (70 aa)).

It belongs to the universal ribosomal protein uS3 family. As to quaternary structure, part of the 30S ribosomal subunit. Forms a tight complex with proteins S10 and S14.

Binds the lower part of the 30S subunit head. Binds mRNA in the 70S ribosome, positioning it for translation. This chain is Small ribosomal subunit protein uS3, found in Fusobacterium nucleatum subsp. nucleatum (strain ATCC 25586 / DSM 15643 / BCRC 10681 / CIP 101130 / JCM 8532 / KCTC 2640 / LMG 13131 / VPI 4355).